The sequence spans 489 residues: Glycogen synthase (489 aa).

Lys-15 lines the ADP-alpha-D-glucose pocket.

It belongs to the glycosyltransferase 1 family. Bacterial/plant glycogen synthase subfamily.

The catalysed reaction is [(1-&gt;4)-alpha-D-glucosyl](n) + ADP-alpha-D-glucose = [(1-&gt;4)-alpha-D-glucosyl](n+1) + ADP + H(+). The protein operates within glycan biosynthesis; glycogen biosynthesis. Synthesizes alpha-1,4-glucan chains using ADP-glucose. The polypeptide is Glycogen synthase (Francisella tularensis subsp. tularensis (strain SCHU S4 / Schu 4)).